The chain runs to 451 residues: Probable multidrug resistance protein NorM (451 aa).

Transmembrane regions (helical) follow at residues 23–43 (GPVV…TAVI), 53–73 (AAAY…GVML), 101–121 (LALL…FVLP), 132–152 (LVAA…AFIA), 169–189 (VALT…FGWG), 194–214 (LGLA…AALL), 243–263 (WPIG…TLLM), 277–297 (TMQT…ATGV), 316–336 (LVGL…ELAA), 355–375 (LIAA…MDGL), 391–411 (VPLL…GSVL), and 422–442 (LWFG…GRFL).

This sequence belongs to the multi antimicrobial extrusion (MATE) (TC 2.A.66.1) family.

The protein resides in the cell membrane. Its function is as follows. Multidrug efflux pump. This Deinococcus radiodurans (strain ATCC 13939 / DSM 20539 / JCM 16871 / CCUG 27074 / LMG 4051 / NBRC 15346 / NCIMB 9279 / VKM B-1422 / R1) protein is Probable multidrug resistance protein NorM (norM).